The following is a 118-amino-acid chain: MSTLYDNIGGQPAIEQVVDELHKRIATDSLLAPIFAGTDMAKQRNHLVAFLGQIFEGPKQYGGRPMDKTHAGLNLQQPHFDAIAKHLGEAMAVRGVSAEDTKAALDRVTNMKGAILNK.

His70 provides a ligand contact to heme.

Belongs to the truncated hemoglobin family. Group I subfamily. Monomer. It depends on heme as a cofactor.

The protein localises to the membrane. This Nostoc sp. (strain MUN 8820) protein is Group 1 truncated hemoglobin GlbN (glbN).